Consider the following 265-residue polypeptide: tRNA (guanine-N(7)-)-methyltransferase (265 aa).

The span at 1-16 (MNHDDPNASGVPHDDA) shows a compositional bias: basic and acidic residues. Positions 1–40 (MNHDDPNASGVPHDDANDAAPASASDAARATGHADDESSP) are disordered. The segment covering 18 to 31 (DAAPASASDAARAT) has biased composition (low complexity). Residues glutamate 95, glutamate 120, aspartate 147, and aspartate 170 each contribute to the S-adenosyl-L-methionine site. Aspartate 170 is a catalytic residue. Substrate is bound by residues lysine 174, aspartate 206, and 241–244 (TKFE).

The protein belongs to the class I-like SAM-binding methyltransferase superfamily. TrmB family.

The catalysed reaction is guanosine(46) in tRNA + S-adenosyl-L-methionine = N(7)-methylguanosine(46) in tRNA + S-adenosyl-L-homocysteine. It functions in the pathway tRNA modification; N(7)-methylguanine-tRNA biosynthesis. Catalyzes the formation of N(7)-methylguanine at position 46 (m7G46) in tRNA. This chain is tRNA (guanine-N(7)-)-methyltransferase, found in Burkholderia thailandensis (strain ATCC 700388 / DSM 13276 / CCUG 48851 / CIP 106301 / E264).